Here is a 61-residue protein sequence, read N- to C-terminus: uncharacterized protein (61 aa).

This is an uncharacterized protein from Escherichia coli (strain K12).